The sequence spans 166 residues: Large ribosomal subunit protein uL10 (166 aa).

This sequence belongs to the universal ribosomal protein uL10 family. As to quaternary structure, part of the ribosomal stalk of the 50S ribosomal subunit. The N-terminus interacts with L11 and the large rRNA to form the base of the stalk. The C-terminus forms an elongated spine to which L12 dimers bind in a sequential fashion forming a multimeric L10(L12)X complex.

Its function is as follows. Forms part of the ribosomal stalk, playing a central role in the interaction of the ribosome with GTP-bound translation factors. The polypeptide is Large ribosomal subunit protein uL10 (Shewanella woodyi (strain ATCC 51908 / MS32)).